A 321-amino-acid polypeptide reads, in one-letter code: G-protein coupled receptor aex-2 (321 aa).

Residues 1-24 (MNSTDIIANVTKPFVENLTLGETA) are Extracellular-facing. 3 N-linked (GlcNAc...) asparagine glycosylation sites follow: Asn2, Asn9, and Asn17. The chain crosses the membrane as a helical span at residues 25–45 (FYISCGIVGTVFNALVLWIAL). Residues 46–55 (TYINTEDKPR) lie on the Cytoplasmic side of the membrane. A helical membrane pass occupies residues 56 to 76 (QIIVINMTVADLLMCIVYMKT). Residues 77-90 (RPWLSHFNLWLCHP) are Extracellular-facing. A disulfide bridge links Cys88 with Cys161. Residues 91–111 (YYVIIWTCQMCSCLNLVWLNV) traverse the membrane as a helical segment. At 112–132 (DKLIYIQFPLHYYQIVNRKRL) the chain is on the cytoplasmic side. The chain crosses the membrane as a helical span at residues 133 to 153 (LWITAATWGGLYAMNIALVTF). Residues 154–175 (LKITRGSCLGVSLNPYVYLLSP) are Extracellular-facing. A helical transmembrane segment spans residues 176–196 (IFYVVMILTSFSLSALIYCIA). The Cytoplasmic segment spans residues 197–221 (HNLTHMEERQRSKLFRRLFFLFSST). The helical transmembrane segment at 222-242 (LWTFFTCLPYRLLYLFSIFCG) threads the bilayer. Residues 243-254 (ETCQINNYYKTA) lie on the Extracellular side of the membrane. A helical transmembrane segment spans residues 255–275 (TNLFFRLLIVGIMINPVITIW). The Cytoplasmic segment spans residues 276–321 (TQRIYRLRLMRMFGRLRENSSTEVLMVSNRRASERPPEHTPLRCDM).

The protein belongs to the G-protein coupled receptor 1 family. In terms of tissue distribution, expressed in the intestinal muscle, anal depressor, AVL and DVB GABAergic neurons, enteric muscles, the nerve ring, the ventral nerve cord and head mesodermal cells.

The protein localises to the cell membrane. The protein resides in the cell projection. It is found in the cilium. G-protein coupled receptor for the nlp-40 neuropeptide. The activity of this receptor is mediated by G proteins which activate adenylyl cyclase. Plays a role in the defecation motor program, which is a coordinated series of three muscle contractions that occurs every 45 seconds. Specifically, acts in GABAergic neurons, such as AVL and DVB, to control the expulsion step of defecation. Required for fatty acid uptake and metabolism by intestinal cells and therefore regulates the levels of triglycerides in the intestine. The protein is G-protein coupled receptor aex-2 of Caenorhabditis elegans.